The primary structure comprises 227 residues: 7-cyano-7-deazaguanine synthase (227 aa).

Leu8–Leu18 serves as a coordination point for ATP. Positions 192, 202, 205, and 208 each coordinate Zn(2+).

The protein belongs to the QueC family. Zn(2+) serves as cofactor.

It carries out the reaction 7-carboxy-7-deazaguanine + NH4(+) + ATP = 7-cyano-7-deazaguanine + ADP + phosphate + H2O + H(+). The protein operates within purine metabolism; 7-cyano-7-deazaguanine biosynthesis. Catalyzes the ATP-dependent conversion of 7-carboxy-7-deazaguanine (CDG) to 7-cyano-7-deazaguanine (preQ(0)). The protein is 7-cyano-7-deazaguanine synthase of Rickettsia prowazekii (strain Madrid E).